The following is a 322-amino-acid chain: NADH-quinone oxidoreductase subunit H (322 aa).

Transmembrane regions (helical) follow at residues 12 to 32 (IGKALIVLVGIVGAGAFMSFI), 79 to 99 (IFILAPIIAFTAFILAFAVVP), 111 to 131 (VGLLYILAIAGLAVYAVLFAG), 151 to 171 (LSYEVFLGLSLMGIVIQTGSF), 183 to 203 (LWNVVPQFLGFITFLFAGVAV), 234 to 254 (FFVGEYIGIVLISSLIVTLFF), 262 to 282 (LPPFFWFALKTACFMVFFILL), and 301 to 321 (VCLPLTLINMLITAAVVLMNV).

This sequence belongs to the complex I subunit 1 family. In terms of assembly, NDH-1 is composed of 13 different subunits. Subunits NuoA, H, J, K, L, M, N constitute the membrane sector of the complex.

The protein resides in the cell inner membrane. The catalysed reaction is a quinone + NADH + 5 H(+)(in) = a quinol + NAD(+) + 4 H(+)(out). Functionally, NDH-1 shuttles electrons from NADH, via FMN and iron-sulfur (Fe-S) centers, to quinones in the respiratory chain. The immediate electron acceptor for the enzyme in this species is believed to be ubiquinone. Couples the redox reaction to proton translocation (for every two electrons transferred, four hydrogen ions are translocated across the cytoplasmic membrane), and thus conserves the redox energy in a proton gradient. This subunit may bind ubiquinone. The protein is NADH-quinone oxidoreductase subunit H of Shewanella oneidensis (strain ATCC 700550 / JCM 31522 / CIP 106686 / LMG 19005 / NCIMB 14063 / MR-1).